The chain runs to 153 residues: Putative pre-16S rRNA nuclease (153 aa).

It belongs to the YqgF nuclease family.

The protein localises to the cytoplasm. In terms of biological role, could be a nuclease involved in processing of the 5'-end of pre-16S rRNA. This is Putative pre-16S rRNA nuclease from Chloroflexus aurantiacus (strain ATCC 29366 / DSM 635 / J-10-fl).